A 248-amino-acid polypeptide reads, in one-letter code: Ubiquinone biosynthesis O-methyltransferase (248 aa).

S-adenosyl-L-methionine-binding residues include Arg-40, Gly-71, Asp-92, and Met-135.

Belongs to the methyltransferase superfamily. UbiG/COQ3 family.

The enzyme catalyses a 3-demethylubiquinol + S-adenosyl-L-methionine = a ubiquinol + S-adenosyl-L-homocysteine + H(+). It carries out the reaction a 3-(all-trans-polyprenyl)benzene-1,2-diol + S-adenosyl-L-methionine = a 2-methoxy-6-(all-trans-polyprenyl)phenol + S-adenosyl-L-homocysteine + H(+). The protein operates within cofactor biosynthesis; ubiquinone biosynthesis. Its function is as follows. O-methyltransferase that catalyzes the 2 O-methylation steps in the ubiquinone biosynthetic pathway. The polypeptide is Ubiquinone biosynthesis O-methyltransferase (Dinoroseobacter shibae (strain DSM 16493 / NCIMB 14021 / DFL 12)).